The primary structure comprises 217 residues: MNQTLLSAFGTAFERVENAIAALREGRGVMVLDDENRENEGDMIFAAETMTVEQMALTIRHGSGIVCLCLTEERRKQLDLPMMVENNTSAFGTGFTVTIEAAHGVTTGVSAADRITTIRAAIADDAKPSDLHRPGHVFPLRAQPGGVLTRGGHTEATIDLVSLAGFKPAGVLCELTNDDGTMARAPECIAFAREHNMPVVTIEDLVSYRQAQERKAS.

Residues 37–38 (RE), D42, 150–154 (RGGHT), and E174 each bind D-ribulose 5-phosphate. Residue E38 coordinates Mg(2+). A Mg(2+)-binding site is contributed by H153.

It belongs to the DHBP synthase family. In terms of assembly, homodimer. Requires Mg(2+) as cofactor. It depends on Mn(2+) as a cofactor.

The enzyme catalyses D-ribulose 5-phosphate = (2S)-2-hydroxy-3-oxobutyl phosphate + formate + H(+). Its pathway is cofactor biosynthesis; riboflavin biosynthesis; 2-hydroxy-3-oxobutyl phosphate from D-ribulose 5-phosphate: step 1/1. Its function is as follows. Catalyzes the conversion of D-ribulose 5-phosphate to formate and 3,4-dihydroxy-2-butanone 4-phosphate. In Cronobacter sakazakii (strain ATCC BAA-894) (Enterobacter sakazakii), this protein is 3,4-dihydroxy-2-butanone 4-phosphate synthase.